A 138-amino-acid polypeptide reads, in one-letter code: Enhancer of split malpha protein (138 aa).

It belongs to the M4-like protein family.

Its function is as follows. Part of the Notch signaling pathway. The chain is Enhancer of split malpha protein from Drosophila melanogaster (Fruit fly).